The chain runs to 545 residues: ATP synthase subunit alpha (545 aa).

173-180 (GDRQTGKT) is an ATP binding site.

This sequence belongs to the ATPase alpha/beta chains family. As to quaternary structure, F-type ATPases have 2 components, CF(1) - the catalytic core - and CF(0) - the membrane proton channel. CF(1) has five subunits: alpha(3), beta(3), gamma(1), delta(1), epsilon(1). CF(0) has three main subunits: a(1), b(2) and c(9-12). The alpha and beta chains form an alternating ring which encloses part of the gamma chain. CF(1) is attached to CF(0) by a central stalk formed by the gamma and epsilon chains, while a peripheral stalk is formed by the delta and b chains.

Its subcellular location is the cell membrane. The catalysed reaction is ATP + H2O + 4 H(+)(in) = ADP + phosphate + 5 H(+)(out). In terms of biological role, produces ATP from ADP in the presence of a proton gradient across the membrane. The alpha chain is a regulatory subunit. The sequence is that of ATP synthase subunit alpha from Clavibacter sepedonicus (Clavibacter michiganensis subsp. sepedonicus).